The chain runs to 255 residues: Vitamin B12 import ATP-binding protein BtuD (255 aa).

Residues Met-2 to Gln-240 form the ABC transporter domain. Gly-30 to Ser-37 is an ATP binding site.

The protein belongs to the ABC transporter superfamily. Vitamin B12 importer (TC 3.A.1.13.1) family. In terms of assembly, the complex is composed of two ATP-binding proteins (BtuD), two transmembrane proteins (BtuC) and a solute-binding protein (BtuF).

The protein localises to the cell inner membrane. It catalyses the reaction an R-cob(III)alamin(out) + ATP + H2O = an R-cob(III)alamin(in) + ADP + phosphate + H(+). In terms of biological role, part of the ABC transporter complex BtuCDF involved in vitamin B12 import. Responsible for energy coupling to the transport system. The polypeptide is Vitamin B12 import ATP-binding protein BtuD (Vibrio campbellii (strain ATCC BAA-1116)).